We begin with the raw amino-acid sequence, 224 residues long: 7-cyano-7-deazaguanine synthase (224 aa).

8–18 lines the ATP pocket; the sequence is LSGGMDSAAVI. Zn(2+) contacts are provided by C186, C196, C199, and C202.

It belongs to the QueC family. Zn(2+) serves as cofactor.

It catalyses the reaction 7-carboxy-7-deazaguanine + NH4(+) + ATP = 7-cyano-7-deazaguanine + ADP + phosphate + H2O + H(+). The protein operates within purine metabolism; 7-cyano-7-deazaguanine biosynthesis. Functionally, catalyzes the ATP-dependent conversion of 7-carboxy-7-deazaguanine (CDG) to 7-cyano-7-deazaguanine (preQ(0)). The sequence is that of 7-cyano-7-deazaguanine synthase from Xanthomonas campestris pv. campestris (strain 8004).